A 108-amino-acid polypeptide reads, in one-letter code: uncharacterized protein (108 aa).

Over residues 39-68 (GLRSRSGTGSGNSRNGLKESGGSRSGPGKP) the composition is skewed to low complexity. The segment at 39-95 (GLRSRSGTGSGNSRNGLKESGGSRSGPGKPRGNRKSSRRIRPRPTSEKPRGYWRSSW) is disordered. Residues 69–80 (RGNRKSSRRIRP) show a composition bias toward basic residues.

This is an uncharacterized protein from Acidithiobacillus ferridurans.